We begin with the raw amino-acid sequence, 507 residues long: Lysine--tRNA ligase (507 aa).

The 'HIGH' region signature appears at 26–34 (PSGPIHVGN). The 'KMSKS' region signature appears at 270 to 274 (AMHSS).

The protein belongs to the class-I aminoacyl-tRNA synthetase family.

It is found in the cytoplasm. It catalyses the reaction tRNA(Lys) + L-lysine + ATP = L-lysyl-tRNA(Lys) + AMP + diphosphate. This chain is Lysine--tRNA ligase (lysS), found in Thermoplasma acidophilum (strain ATCC 25905 / DSM 1728 / JCM 9062 / NBRC 15155 / AMRC-C165).